The following is a 323-amino-acid chain: Probable oxidoreductase patJ (323 aa).

A disordered region spans residues 291–323; that stretch reads DQSANGVNGHATGVEAKKKQLGDMTRRRSGAQE. Positions 305-316 are enriched in basic and acidic residues; sequence EAKKKQLGDMTR.

Belongs to the oxidoreductase OpS7 family.

Its subcellular location is the vacuole lumen. It is found in the cytoplasmic vesicle lumen. It functions in the pathway mycotoxin biosynthesis; patulin biosynthesis. Its function is as follows. Probable oxidoreductase; part of the gene cluster that mediates the biosynthesis of patulin, an acetate-derived tetraketide mycotoxin produced by several fungal species that shows antimicrobial properties against several bacteria. PatJ acts with patO in the vacuole to convert gentisyl alcohol to isoepoxydon. The pathway begins with the synthesis of 6-methylsalicylic acid by the polyketide synthase (PKS) patK via condensation of acetate and malonate units. The 6-methylsalicylic acid decarboxylase patG then catalyzes the decarboxylation of 6-methylsalicylic acid to yield m-cresol (also known as 3-methylphenol). These first reactions occur in the cytosol. The intermediate m-cresol is then transported into the endoplasmic reticulum where the cytochrome P450 monooxygenase patH converts it to m-hydroxybenzyl alcohol, which is further converted to gentisyl alcohol by the cytochrome P450 monooxygenase patI. The oxidoreductases patJ and patO further convert gentisyl alcohol to isoepoxydon in the vacuole. PatN catalyzes then the transformation of isoepoxydon into phyllostine. The cluster protein patF is responsible for the conversion from phyllostine to neopatulin whereas the alcohol dehydrogenase patD converts neopatulin to E-ascladiol. The steps between isoepoxydon and E-ascladiol occur in the cytosol, and E-ascladiol is probably secreted to the extracellular space by one of the cluster-specific transporters patC or patM. Finally, the secreted patulin synthase patE catalyzes the conversion of E-ascladiol to patulin. The chain is Probable oxidoreductase patJ from Aspergillus clavatus (strain ATCC 1007 / CBS 513.65 / DSM 816 / NCTC 3887 / NRRL 1 / QM 1276 / 107).